Consider the following 260-residue polypeptide: 3'-5' ssDNA/RNA exonuclease TatD (260 aa).

A divalent metal cation-binding residues include E92, H128, and H153.

The protein belongs to the metallo-dependent hydrolases superfamily. TatD-type hydrolase family. TatD subfamily. In terms of assembly, monomer. Mg(2+) serves as cofactor.

The protein resides in the cytoplasm. Functionally, 3'-5' exonuclease that prefers single-stranded DNA and RNA. May play a role in the H(2)O(2)-induced DNA damage repair. The polypeptide is 3'-5' ssDNA/RNA exonuclease TatD (Edwardsiella piscicida).